Consider the following 138-residue polypeptide: Basic phospholipase A2 Mtx-b (138 aa).

An N-terminal signal peptide occupies residues 1-16; the sequence is MRALWIVAVLLVGVEG. 7 disulfides stabilise this stretch: cysteine 42–cysteine 131, cysteine 44–cysteine 60, cysteine 59–cysteine 111, cysteine 65–cysteine 138, cysteine 66–cysteine 104, cysteine 73–cysteine 97, and cysteine 91–cysteine 102. 3 residues coordinate Ca(2+): tyrosine 43, glycine 45, and glycine 47. Histidine 63 is an active-site residue. A Ca(2+)-binding site is contributed by aspartate 64. The active site involves aspartate 105.

Heterodimer of an acidic subunit and a basic chain. The acidic subunit is non-toxic, without enzymatic activity and comprises 3 peptides that are cross-linked by 7 disulfide bridges. The basic subunit is toxic, has phospholipase A2 activity and is composed of a single chain. It depends on Ca(2+) as a cofactor. As to expression, expressed by the venom gland.

It is found in the secreted. It carries out the reaction a 1,2-diacyl-sn-glycero-3-phosphocholine + H2O = a 1-acyl-sn-glycero-3-phosphocholine + a fatty acid + H(+). Its function is as follows. Snake venom phospholipase A2 (PLA2) that inhibits neuromuscular transmission by blocking acetylcholine release from the nerve termini. PLA2 catalyzes the calcium-dependent hydrolysis of the 2-acyl groups in 3-sn-phosphoglycerides. This Crotalus scutulatus scutulatus (Mojave rattlesnake) protein is Basic phospholipase A2 Mtx-b.